The sequence spans 104 residues: Protamine-3 (104 aa).

Positions 1-104 are disordered; that stretch reads MGSRCAKLST…PSPEPKQKHS (104 aa). A compositionally biased stretch (acidic residues) spans 45-70; the sequence is EGEEEEEDEEDEEEEDDDEEDEEEEQ. Ser-96 bears the Phosphoserine mark.

Belongs to the protamine P3 family. As to expression, testis.

It localises to the nucleus. It is found in the chromosome. Its function is as follows. Protamines substitute for histones in the chromatin of sperm during the haploid phase of spermatogenesis. They compact sperm DNA into a highly condensed, stable and inactive complex. The polypeptide is Protamine-3 (Prm3) (Rattus norvegicus (Rat)).